We begin with the raw amino-acid sequence, 417 residues long: Ankyrin repeat and SAM domain-containing protein 4B (417 aa).

A mediates localization to microvilli region spans residues 1–252; that stretch reads MSTRYHQAAS…SGDFKEKLQL (252 aa). ANK repeat units follow at residues 31-60, 64-93, and 97-126; these read DGMTPTLLAAYHGNLEALEIICSRGGDPDR, WGNTPLHFAASNGHAHCVSFLVNFGANIFA, and DLQTPLDAAASREQNECVALLDKAATAQNI. Residues 130-164 adopt a coiled-coil conformation; sequence KKVTRLKEQAQKNARRQIKECERLQEKHQNKMAHT. The segment at 151–195 is disordered; sequence ERLQEKHQNKMAHTYSKEESGTLSSSKGTFSRSSPSNASAPGTFG. Residues 171-190 are compositionally biased toward polar residues; sequence GTLSSSKGTFSRSSPSNASA. The segment at 253-346 is mediates interaction with MYO7B; it reads SAEEDGSVHH…EWEEDVVDAT (94 aa). Phosphoserine is present on Ser283. Residues 305-330 are disordered; the sequence is RQGASEADEGAADEEGEENGLKDDLP. Residues 310–322 are compositionally biased toward acidic residues; the sequence is EADEGAADEEGEE. The SAM domain maps to 351–403; it reads FLLSQHLEEFLPIFKREQIDLEALLLCSDEDLQSIQMQLGPRKKVLNAINRRK. The PDZ-binding; mediates interaction with USH1C signature appears at 415–417; that stretch reads TSL.

As to quaternary structure, part of the IMAC/intermicrovillar adhesion complex/intermicrovillar tip-link complex composed of ANKS4B, MYO7B, USH1C, CDHR2 and CDHR5. Interacts with USH1C; the interaction is direct and is required for ANKS4B localization to the tip of microvilli. Interacts with MYO7B; the interaction is direct. May interact with HSPA5. Expressed in kidney and small intestine.

It localises to the cell projection. The protein resides in the microvillus. Functionally, as part of the intermicrovillar adhesion complex/IMAC plays a role in epithelial brush border differentiation, controlling microvilli organization and length. Plays a role in assembly of the complex. May play a role in cellular response to endoplasmic reticulum stress. The protein is Ankyrin repeat and SAM domain-containing protein 4B of Homo sapiens (Human).